A 302-amino-acid chain; its full sequence is Deoxyhypusine hydroxylase-B (302 aa).

HEAT-like PBS-type repeat units follow at residues 49–75 (LAHE…VLKD), 82–108 (VRHE…SLAV), 171–200 (MYER…LGVK), 204–230 (LRHE…VLKN), and 237–263 (VRHE…FAKD). Residues His51, Glu52, His84, and Glu85 each coordinate Fe cation. Fe cation contacts are provided by His206, Glu207, His239, and Glu240.

Belongs to the deoxyhypusine hydroxylase family. Requires Fe(2+) as cofactor.

The catalysed reaction is [eIF5A protein]-deoxyhypusine + AH2 + O2 = [eIF5A protein]-hypusine + A + H2O. The protein operates within protein modification; eIF5A hypusination. Catalyzes the hydroxylation of the N(6)-(4-aminobutyl)-L-lysine intermediate to form hypusine, an essential post-translational modification only found in mature eIF-5A factor. This chain is Deoxyhypusine hydroxylase-B, found in Oryza sativa subsp. japonica (Rice).